The chain runs to 83 residues: Small ribosomal subunit protein bS16 (83 aa).

This sequence belongs to the bacterial ribosomal protein bS16 family.

The chain is Small ribosomal subunit protein bS16 from Pseudomonas fluorescens (strain SBW25).